The primary structure comprises 401 residues: Methionine import ATP-binding protein MetN (401 aa).

The 243-residue stretch at 6–248 folds into the ABC transporter domain; the sequence is ITFDHVVKEF…PQQPVTKRFI (243 aa). ATP is bound at residue 45–52; it reads GYSGAGKS.

Belongs to the ABC transporter superfamily. Methionine importer (TC 3.A.1.24) family. The complex is composed of two ATP-binding proteins (MetN), two transmembrane proteins (MetI) and a solute-binding protein (MetQ).

The protein resides in the cell membrane. The enzyme catalyses L-methionine(out) + ATP + H2O = L-methionine(in) + ADP + phosphate + H(+). It carries out the reaction D-methionine(out) + ATP + H2O = D-methionine(in) + ADP + phosphate + H(+). Functionally, part of the ABC transporter complex MetNIQ involved in methionine import. Responsible for energy coupling to the transport system. The protein is Methionine import ATP-binding protein MetN of Bifidobacterium longum (strain NCC 2705).